The chain runs to 118 residues: Small ribosomal subunit protein uS13 (118 aa).

Residues Gly-94–Lys-118 are disordered.

Belongs to the universal ribosomal protein uS13 family. As to quaternary structure, part of the 30S ribosomal subunit. Forms a loose heterodimer with protein S19. Forms two bridges to the 50S subunit in the 70S ribosome.

Located at the top of the head of the 30S subunit, it contacts several helices of the 16S rRNA. In the 70S ribosome it contacts the 23S rRNA (bridge B1a) and protein L5 of the 50S subunit (bridge B1b), connecting the 2 subunits; these bridges are implicated in subunit movement. Contacts the tRNAs in the A and P-sites. The sequence is that of Small ribosomal subunit protein uS13 from Histophilus somni (strain 129Pt) (Haemophilus somnus).